The chain runs to 310 residues: uncharacterized protein (310 aa).

Disordered stretches follow at residues 22-163 (LARQ…PVEH) and 178-209 (EAEA…VEGD). 2 stretches are compositionally biased toward basic and acidic residues: residues 56–66 (IIRDDHHHAGP) and 183–197 (TEVR…ERHA). Residues 198 to 209 (AAAAAGTDVEGD) are compositionally biased toward low complexity. 3 helical membrane passes run 231-251 (ALVV…FIAF), 257-277 (WNSI…VVSV), and 286-306 (IAST…PLAL).

This sequence to M.leprae ML2433.

The protein resides in the cell membrane. This is an uncharacterized protein from Mycobacterium tuberculosis (strain CDC 1551 / Oshkosh).